An 880-amino-acid polypeptide reads, in one-letter code: Interference hedgehog (880 aa).

Residues 1–20 form the signal peptide; the sequence is MTLLTSSLLFFSLLTSRLEA. The Extracellular portion of the chain corresponds to 21-703; it reads IPVLEKSPAH…ETFNMSPMLT (683 aa). 4 Ig-like C2-type domains span residues 45–142, 132–234, 252–340, and 346–432; these read PGVR…IARL, PLVV…IQLT, PHLL…YIKV, and PQIV…LQVN. 4 disulfides stabilise this stretch: Cys68-Cys126, Cys173-Cys220, Cys276-Cys324, and Cys367-Cys414. N-linked (GlcNAc...) asparagine glycosylation is found at Asn102 and Asn209. The disordered stretch occupies residues 426–467; sequence GTLLQVNPKQIQEPRESGGTHRPKPNQGSKQKQMYPPTPPNV. 2 consecutive Fibronectin type-III domains span residues 461-567 and 575-670; these read PPTP…LQPG and VPEL…TQRP. An N-linked (GlcNAc...) asparagine glycan is attached at Asn466. The heparin site is built by Arg497, Lys501, Lys503, and Arg541. N-linked (GlcNAc...) asparagine glycosylation is present at Asn557. The disordered stretch occupies residues 662–697; the sequence is LKQGRTQRPKTSTTEEPTLQMGDRDTTTPSHNETFN. 2 stretches are compositionally biased toward polar residues: residues 665–678 and 688–697; these read GRTQRPKTSTTEEP and TTPSHNETFN. Asn693 carries N-linked (GlcNAc...) asparagine glycosylation. The chain crosses the membrane as a helical span at residues 704-724; that stretch reads GTIGGGAVLILLLISTCLCVC. Residues 725-880 lie on the Cytoplasmic side of the membrane; that stretch reads RRRSSRSRGN…SSGSLNSVGV (156 aa). Disordered stretches follow at residues 728 to 762 and 775 to 880; these read SSRSRGNNPNKPRMAELRDDFVPLGNCSPTKQRQR and QQQQ…SVGV. Composition is skewed to low complexity over residues 823–837 and 864–880; these read RAGGSNGSNNGNNNN and SSRSENLSSGSLNSVGV.

Belongs to the immunoglobulin superfamily. IHOG family. In terms of assembly, homodimer. Heterotetramer; 2 iHog chains bind 2 hh chains when facilitated by heparin, heparin is required to promote high-affinity interactions between hh and iHog.

The protein localises to the membrane. Its function is as follows. Mediates response to the active Hedgehog (Hh) protein signal in embryos, functioning upstream or at the level of patched (ptc). The sequence is that of Interference hedgehog from Drosophila yakuba (Fruit fly).